The primary structure comprises 236 residues: EEF1A lysine methyltransferase 2 (236 aa).

The segment covering 1-11 (MSSGADGGGGA) has biased composition (gly residues). The disordered stretch occupies residues 1–31 (MSSGADGGGGAAVAARSDKGSPGEDGFVPSA). Position 2 is an N-acetylserine (serine 2). Serine 21 carries the phosphoserine modification.

The protein belongs to the class I-like SAM-binding methyltransferase superfamily. EFM4 family.

The protein resides in the cytoplasm. Its subcellular location is the nucleus. The enzyme catalyses L-lysyl-[protein] + 3 S-adenosyl-L-methionine = N(6),N(6),N(6)-trimethyl-L-lysyl-[protein] + 3 S-adenosyl-L-homocysteine + 3 H(+). Functionally, protein-lysine methyltransferase that selectively catalyzes the trimethylation of EEF1A at 'Lys-318'. This Homo sapiens (Human) protein is EEF1A lysine methyltransferase 2.